The following is a 291-amino-acid chain: RPE-retinal G protein-coupled receptor (291 aa).

The Extracellular portion of the chain corresponds to 1–15; sequence MAETSALPTGFGELE. A helical transmembrane segment spans residues 16 to 36; the sequence is VLAVGMVLLVEALSGLSLNTL. At 37–52 the chain is on the cytoplasmic side; it reads TIFSFCKTPELRTPCH. Residues 53–73 form a helical membrane-spanning segment; that stretch reads LLVLSLALADSGISLNALVAA. Topologically, residues 74–91 are extracellular; it reads TSSLLRRWPYGSDGCQAH. Cysteines 88 and 162 form a disulfide. Residues 92 to 112 traverse the membrane as a helical segment; sequence GFQGFVTALASICSSAAIAWG. At 113–130 the chain is on the cytoplasmic side; it reads RYHHYCTRSQLAWNSAVS. A helical transmembrane segment spans residues 131–151; it reads LVLFVWLSSAFWAALPLLGWG. The Extracellular segment spans residues 152–175; sequence HYDYEPLGTCCTLDYSKGDRNFTS. N-linked (GlcNAc...) asparagine glycosylation occurs at asparagine 172. A helical transmembrane segment spans residues 176–196; the sequence is FLFTMSFFNFAMPLFITITSY. The Cytoplasmic segment spans residues 197 to 219; that stretch reads SLMEQKLGKSGHLQVNTTLPART. The helical transmembrane segment at 220 to 240 threads the bilayer; sequence LLLGWGPYAILYLYAVIADVT. Residues 241–247 lie on the Extracellular side of the membrane; the sequence is SISPKLQ. Residues 248 to 268 traverse the membrane as a helical segment; it reads MVPALIAKMVPTINAINYALG. N6-(retinylidene)lysine is present on lysine 255. Over 269-291 the chain is Cytoplasmic; the sequence is NEMVCRGIWQCLSPQKREKDRTK.

The protein belongs to the G-protein coupled receptor 1 family. Opsin subfamily. Covalently binds all-trans- and 11-cis-retinal. Preferentially expressed at high levels in the retinal pigment epithelium (RPE) and Mueller cells of the neural retina.

It is found in the membrane. Its function is as follows. Receptor for all-trans- and 11-cis-retinal. Binds preferentially to the former and may catalyze the isomerization of the chromophore by a retinochrome-like mechanism. The chain is RPE-retinal G protein-coupled receptor (RGR) from Homo sapiens (Human).